Consider the following 209-residue polypeptide: Large ribosomal subunit protein uL3 (209 aa).

Residues 127-151 (SGGPSSHGSKFHRHLGGTGQATTPA) are disordered.

This sequence belongs to the universal ribosomal protein uL3 family. Part of the 50S ribosomal subunit. Forms a cluster with proteins L14 and L19.

Functionally, one of the primary rRNA binding proteins, it binds directly near the 3'-end of the 23S rRNA, where it nucleates assembly of the 50S subunit. The polypeptide is Large ribosomal subunit protein uL3 (Borrelia duttonii (strain Ly)).